The chain runs to 606 residues: 4-hydroxy-3-methylbut-2-en-1-yl diphosphate synthase (flavodoxin) (606 aa).

Cys-513, Cys-516, Cys-547, and Glu-554 together coordinate [4Fe-4S] cluster.

The protein belongs to the IspG family. The cofactor is [4Fe-4S] cluster.

The catalysed reaction is (2E)-4-hydroxy-3-methylbut-2-enyl diphosphate + oxidized [flavodoxin] + H2O + 2 H(+) = 2-C-methyl-D-erythritol 2,4-cyclic diphosphate + reduced [flavodoxin]. Its pathway is isoprenoid biosynthesis; isopentenyl diphosphate biosynthesis via DXP pathway; isopentenyl diphosphate from 1-deoxy-D-xylulose 5-phosphate: step 5/6. Functionally, converts 2C-methyl-D-erythritol 2,4-cyclodiphosphate (ME-2,4cPP) into 1-hydroxy-2-methyl-2-(E)-butenyl 4-diphosphate. The chain is 4-hydroxy-3-methylbut-2-en-1-yl diphosphate synthase (flavodoxin) from Chlamydia felis (strain Fe/C-56) (Chlamydophila felis).